An 839-amino-acid polypeptide reads, in one-letter code: uncharacterized protein (839 aa).

Disordered stretches follow at residues 504-611 (TVSP…NVVN), 627-646 (KNNN…DNHC), and 682-839 (NHNY…SLGS). Low complexity predominate over residues 509–611 (GNNNVTGDVD…EGSNNCNVVN (103 aa)). Residues 636–646 (NEYKNSNDNHC) are compositionally biased toward basic and acidic residues. 2 stretches are compositionally biased toward low complexity: residues 689-704 (NGNN…NNNN) and 713-753 (QQQP…NNNK). A coiled-coil region spans residues 726 to 764 (QQSQQQPQLQQKKQQIQEEQQNLNNNNKSIEDDEEAFNS). Residues 765-776 (DDEHDHEDDSIR) show a composition bias toward basic and acidic residues. Positions 809–823 (EDNDDDSDISDSDSD) are enriched in acidic residues.

This is an uncharacterized protein from Dictyostelium discoideum (Social amoeba).